The sequence spans 369 residues: Histidinol-phosphate aminotransferase 3 (369 aa).

Position 220 is an N6-(pyridoxal phosphate)lysine (lysine 220).

It belongs to the class-II pyridoxal-phosphate-dependent aminotransferase family. Histidinol-phosphate aminotransferase subfamily. As to quaternary structure, homodimer. It depends on pyridoxal 5'-phosphate as a cofactor.

It carries out the reaction L-histidinol phosphate + 2-oxoglutarate = 3-(imidazol-4-yl)-2-oxopropyl phosphate + L-glutamate. It functions in the pathway amino-acid biosynthesis; L-histidine biosynthesis; L-histidine from 5-phospho-alpha-D-ribose 1-diphosphate: step 7/9. This Mesorhizobium japonicum (strain LMG 29417 / CECT 9101 / MAFF 303099) (Mesorhizobium loti (strain MAFF 303099)) protein is Histidinol-phosphate aminotransferase 3 (hisC3).